Reading from the N-terminus, the 90-residue chain is Small ribosomal subunit protein uS15c (90 aa).

This sequence belongs to the universal ribosomal protein uS15 family. Part of the 30S ribosomal subunit.

Its subcellular location is the plastid. The protein resides in the chloroplast. In Hordeum vulgare (Barley), this protein is Small ribosomal subunit protein uS15c (rps15-A).